We begin with the raw amino-acid sequence, 648 residues long: Transketolase (648 aa).

Histidine 22 is a substrate binding site. Thiamine diphosphate-binding positions include histidine 62 and 109 to 111 (GPL). Position 150 (aspartate 150) interacts with Mg(2+). Thiamine diphosphate contacts are provided by glycine 151 and asparagine 180. Mg(2+)-binding residues include asparagine 180 and valine 182. Residues histidine 252, arginine 345, and serine 372 each coordinate substrate. Histidine 252 lines the thiamine diphosphate pocket. Glutamate 397 functions as the Proton donor in the catalytic mechanism. Phenylalanine 423 serves as a coordination point for thiamine diphosphate. Residues histidine 447, aspartate 455, and arginine 506 each contribute to the substrate site.

The protein belongs to the transketolase family. In terms of assembly, homodimer. It depends on Mg(2+) as a cofactor. The cofactor is Ca(2+). Requires Mn(2+) as cofactor. Co(2+) serves as cofactor. Thiamine diphosphate is required as a cofactor.

It catalyses the reaction D-sedoheptulose 7-phosphate + D-glyceraldehyde 3-phosphate = aldehydo-D-ribose 5-phosphate + D-xylulose 5-phosphate. Its function is as follows. Catalyzes the transfer of a two-carbon ketol group from a ketose donor to an aldose acceptor, via a covalent intermediate with the cofactor thiamine pyrophosphate. This chain is Transketolase (tkt), found in Mycoplasma genitalium (strain ATCC 33530 / DSM 19775 / NCTC 10195 / G37) (Mycoplasmoides genitalium).